We begin with the raw amino-acid sequence, 112 residues long: Large ribosomal subunit protein uL22 (112 aa).

The protein belongs to the universal ribosomal protein uL22 family. Part of the 50S ribosomal subunit.

Its function is as follows. This protein binds specifically to 23S rRNA; its binding is stimulated by other ribosomal proteins, e.g. L4, L17, and L20. It is important during the early stages of 50S assembly. It makes multiple contacts with different domains of the 23S rRNA in the assembled 50S subunit and ribosome. In terms of biological role, the globular domain of the protein is located near the polypeptide exit tunnel on the outside of the subunit, while an extended beta-hairpin is found that lines the wall of the exit tunnel in the center of the 70S ribosome. This Caldanaerobacter subterraneus subsp. tengcongensis (strain DSM 15242 / JCM 11007 / NBRC 100824 / MB4) (Thermoanaerobacter tengcongensis) protein is Large ribosomal subunit protein uL22.